A 528-amino-acid chain; its full sequence is 4-nitrophenol 4-monooxygenase/4-nitrocatechol 2-monooxygenase, oxygenase component (528 aa).

Residue 100 to 104 coordinates substrate; sequence RPPAG. Residues 153–155, 159–162, and threonine 194 each bind FAD; these read PMF and QFDR. A substrate-binding site is contributed by 205–206; the sequence is GN. FAD is bound at residue 461 to 464; it reads TMQR.

This sequence belongs to the FADH(2)-utilizing monooxygenase family. The 4-NP/4-NCA monooxygenase is composed of an oxygenase component NpcA and a reductase component NpcB. FAD is required as a cofactor.

It carries out the reaction 4-nitrophenol + NADH + O2 + H(+) = 4-nitrocatechol + NAD(+) + H2O. It catalyses the reaction 4-nitrocatechol + NADPH + O2 = 2-hydroxy-1,4-benzoquinone + nitrite + NADP(+) + H2O. The catalysed reaction is 4-nitrocatechol + NADH + O2 = 2-hydroxy-1,4-benzoquinone + nitrite + NAD(+) + H2O. Its pathway is aromatic compound metabolism. The protein operates within xenobiotic degradation. Inhibited by methimazole. In terms of biological role, involved in the degradation of para-nitrophenol (4-NP). Catalyzes both the initial hydroxylation of 4-NP to produce 4-nitrocatechol (4-NCA) and the subsequent oxidative release of the nitro group from 4-NCA to produce 2-hydroxy-1,4-benzoquinone. It can also use 4-nitroresorcinol as substrate with a rate of nitrite release similar to that observed with the two physiological substrates, 4-PN and 4-NCA. The sequence is that of 4-nitrophenol 4-monooxygenase/4-nitrocatechol 2-monooxygenase, oxygenase component (npcA) from Rhodococcus opacus (Nocardia opaca).